A 318-amino-acid chain; its full sequence is Acetyl-coenzyme A carboxylase carboxyl transferase subunit alpha (318 aa).

The 262-residue stretch at 32–293 folds into the CoA carboxyltransferase C-terminal domain; the sequence is NLSDELERLR…KERLVSQLDR (262 aa).

This sequence belongs to the AccA family. Acetyl-CoA carboxylase is a heterohexamer composed of biotin carboxyl carrier protein (AccB), biotin carboxylase (AccC) and two subunits each of ACCase subunit alpha (AccA) and ACCase subunit beta (AccD).

It localises to the cytoplasm. It catalyses the reaction N(6)-carboxybiotinyl-L-lysyl-[protein] + acetyl-CoA = N(6)-biotinyl-L-lysyl-[protein] + malonyl-CoA. The protein operates within lipid metabolism; malonyl-CoA biosynthesis; malonyl-CoA from acetyl-CoA: step 1/1. Its function is as follows. Component of the acetyl coenzyme A carboxylase (ACC) complex. First, biotin carboxylase catalyzes the carboxylation of biotin on its carrier protein (BCCP) and then the CO(2) group is transferred by the carboxyltransferase to acetyl-CoA to form malonyl-CoA. This chain is Acetyl-coenzyme A carboxylase carboxyl transferase subunit alpha, found in Saccharophagus degradans (strain 2-40 / ATCC 43961 / DSM 17024).